The following is a 293-amino-acid chain: Small ribosomal subunit biogenesis GTPase RsgA (293 aa).

Residues 63–223 (KNELVRPPIA…VADTPGFSSL (161 aa)) enclose the CP-type G domain. GTP is bound by residues 112-115 (SKMD) and 166-174 (GQSGVGKSS). Zn(2+) contacts are provided by Cys247, Cys252, His254, and Cys260.

It belongs to the TRAFAC class YlqF/YawG GTPase family. RsgA subfamily. Monomer. Associates with 30S ribosomal subunit, binds 16S rRNA. It depends on Zn(2+) as a cofactor.

The protein localises to the cytoplasm. Its function is as follows. One of several proteins that assist in the late maturation steps of the functional core of the 30S ribosomal subunit. Helps release RbfA from mature subunits. May play a role in the assembly of ribosomal proteins into the subunit. Circularly permuted GTPase that catalyzes slow GTP hydrolysis, GTPase activity is stimulated by the 30S ribosomal subunit. The sequence is that of Small ribosomal subunit biogenesis GTPase RsgA from Bacillus cereus (strain ATCC 14579 / DSM 31 / CCUG 7414 / JCM 2152 / NBRC 15305 / NCIMB 9373 / NCTC 2599 / NRRL B-3711).